Here is a 155-residue protein sequence, read N- to C-terminus: MAEKMNVESFNLDHTKVKAPFVRLAGTKVGVHGDEIYKYDVRFKQPNKEHMEMPALHSLEHLMAELARNHTDKLVDISPMGCQTGFYVSFINHSDYDDALEIIATTLTDVLAATEVPACNEVQCGWAASHSLEGAKALAAEFLDKRDEWKNVFGE.

3 residues coordinate Fe cation: His-57, His-61, and Cys-124.

The protein belongs to the LuxS family. Homodimer. The cofactor is Fe cation.

The catalysed reaction is S-(5-deoxy-D-ribos-5-yl)-L-homocysteine = (S)-4,5-dihydroxypentane-2,3-dione + L-homocysteine. Its function is as follows. Involved in the synthesis of autoinducer 2 (AI-2) which is secreted by bacteria and is used to communicate both the cell density and the metabolic potential of the environment. The regulation of gene expression in response to changes in cell density is called quorum sensing. Catalyzes the transformation of S-ribosylhomocysteine (RHC) to homocysteine (HC) and 4,5-dihydroxy-2,3-pentadione (DPD). This is S-ribosylhomocysteine lyase from Listeria monocytogenes serotype 4b (strain CLIP80459).